The following is an 866-amino-acid chain: MYRTHRQHSLLSSGGVPSFIGGLVVFVSAAFNAQAETWFDPAFFKDDPSMVADLSRFEKGQKITPGVYRVDIVLNQTIVDTRNVNFVEITPEKGIAACLTTESLDAMGVNTDAFPAFKQLDKQACAPLAEIIPDASVTFNVNKLRLEISVPQIAIKSNARGYVPPERWDEGINALLLGYSFSGANSIHSSADSDSGDSYFLNLNSGVNLGPWRLRNNSTWSRSSGQTAEWKNLSSYLQRAVIPLKGELTVGDDYTAGDFFDSVSFRGVQLASDDNMLPDSLKGFAPVVRGIAKSNAQITIKQNGYTIYQTYVSPGAFEISDIYSTSSSGDLLVEIKEADGSVNSYSVPFSSVPLLQRQGRIKYAVTLAKYRTNSNEQQESKFAQATLQWGGPWGTTWYGGGQYAEYYRAAMFGLGFNLGDFGAISFDVTQAKSTLADQSEHKGQSYRFLYAKTLNQLGTNFQLMGYRYSTSGFYTLSDTMYKHMDGYEFNDGDDEDTPMWSRYYNLFYTKRGKLQVNISQQLSEYGSFYLSGSQQTYWHTDQQDRLLQFGYNTQIKDLSLGISWNYSKSRGQPDADQVFALNFSLPLNLLLSRSNDSYTSKKNYAWMTSNTSIDNEGHTTQNLGLTETLLDDGNLSYSVQQGYNSEGKTANGSASMDYKGVFADARVGYNYSDNGSQQQLNYALSGSLVAHSQGITLGQSLGETNVLIAAPGAENTRVANSTGLKTDWRGYTVVPYATSYRENRIALDAASLKRNVDLENAVVNVVPTKGALVLAEFNAHAGARVLMKTSKQGISLRFGAIATLDGVQTNSGIIDDDGSLYMAGLPAKGTITVRWGEAPDQICHISYELTEQQINSAITRMDAICR.

Positions 1–35 (MYRTHRQHSLLSSGGVPSFIGGLVVFVSAAFNAQA) are cleaved as a signal peptide.

The protein belongs to the fimbrial export usher family.

Its subcellular location is the cell outer membrane. Its function is as follows. Part of the elfADCG fimbrial operon, which could be required for adherence to host epithelial cells. Could be involved in the export and assembly of the ElfA fimbrial subunits across the outer membrane. The chain is Probable outer membrane usher protein ElfC (elfC) from Escherichia coli O157:H7.